The following is a 162-amino-acid chain: Sec-independent protein translocase protein TatB (162 aa).

The helical transmembrane segment at 1–21 (MFDIGFLEIIVIMVIALIVIG) threads the bilayer. The segment at 86–162 (IQDEFGIDQE…ESTPESSNKS (77 aa)) is disordered. Positions 108–117 (FSGTQFNKAP) are enriched in polar residues. A compositionally biased stretch (low complexity) spans 123-135 (PTTEESPSSTPET). Over residues 147 to 162 (DVSAPSESTPESSNKS) the composition is skewed to polar residues.

It belongs to the TatB family. In terms of assembly, the Tat system comprises two distinct complexes: a TatABC complex, containing multiple copies of TatA, TatB and TatC subunits, and a separate TatA complex, containing only TatA subunits. Substrates initially bind to the TatABC complex, which probably triggers association of the separate TatA complex to form the active translocon.

Its subcellular location is the cell inner membrane. Part of the twin-arginine translocation (Tat) system that transports large folded proteins containing a characteristic twin-arginine motif in their signal peptide across membranes. Together with TatC, TatB is part of a receptor directly interacting with Tat signal peptides. TatB may form an oligomeric binding site that transiently accommodates folded Tat precursor proteins before their translocation. The chain is Sec-independent protein translocase protein TatB from Hydrogenovibrio crunogenus (strain DSM 25203 / XCL-2) (Thiomicrospira crunogena).